Reading from the N-terminus, the 71-residue chain is Sec-independent protein translocase protein TatA (71 aa).

The helical transmembrane segment at 1-21 (MGSFSMGHWLIVLAIIVLLFG) threads the bilayer. Residues 41 to 57 (KEMEDETPVEKIEKADS) show a composition bias toward basic and acidic residues. Positions 41–71 (KEMEDETPVEKIEKADSETQSTKQNETTKNV) are disordered. Residues 58-71 (ETQSTKQNETTKNV) show a composition bias toward polar residues.

This sequence belongs to the TatA/E family. As to quaternary structure, the Tat system comprises two distinct complexes: a TatABC complex, containing multiple copies of TatA, TatB and TatC subunits, and a separate TatA complex, containing only TatA subunits. Substrates initially bind to the TatABC complex, which probably triggers association of the separate TatA complex to form the active translocon.

Its subcellular location is the cell inner membrane. Its function is as follows. Part of the twin-arginine translocation (Tat) system that transports large folded proteins containing a characteristic twin-arginine motif in their signal peptide across membranes. TatA could form the protein-conducting channel of the Tat system. This Campylobacter fetus subsp. fetus (strain 82-40) protein is Sec-independent protein translocase protein TatA.